The following is a 376-amino-acid chain: Sulfate/thiosulfate import ATP-binding protein CysA 1 (376 aa).

Residues 3-237 enclose the ABC transporter domain; it reads IRLTNISKKF…PNSRFVFDFL (235 aa). 35–42 contacts ATP; that stretch reads GPSGSGKT.

Belongs to the ABC transporter superfamily. Sulfate/tungstate importer (TC 3.A.1.6) family. The complex is composed of two ATP-binding proteins (CysA), two transmembrane proteins (CysT and CysW) and a solute-binding protein (CysP).

Its subcellular location is the cell inner membrane. The catalysed reaction is sulfate(out) + ATP + H2O = sulfate(in) + ADP + phosphate + H(+). It carries out the reaction thiosulfate(out) + ATP + H2O = thiosulfate(in) + ADP + phosphate + H(+). Part of the ABC transporter complex CysAWTP involved in sulfate/thiosulfate import. Responsible for energy coupling to the transport system. The protein is Sulfate/thiosulfate import ATP-binding protein CysA 1 of Shewanella oneidensis (strain ATCC 700550 / JCM 31522 / CIP 106686 / LMG 19005 / NCIMB 14063 / MR-1).